A 213-amino-acid chain; its full sequence is ATP phosphoribosyltransferase (213 aa).

The protein belongs to the ATP phosphoribosyltransferase family. Short subfamily. Heteromultimer composed of HisG and HisZ subunits.

The protein resides in the cytoplasm. It catalyses the reaction 1-(5-phospho-beta-D-ribosyl)-ATP + diphosphate = 5-phospho-alpha-D-ribose 1-diphosphate + ATP. Its pathway is amino-acid biosynthesis; L-histidine biosynthesis; L-histidine from 5-phospho-alpha-D-ribose 1-diphosphate: step 1/9. Functionally, catalyzes the condensation of ATP and 5-phosphoribose 1-diphosphate to form N'-(5'-phosphoribosyl)-ATP (PR-ATP). Has a crucial role in the pathway because the rate of histidine biosynthesis seems to be controlled primarily by regulation of HisG enzymatic activity. In Crocosphaera subtropica (strain ATCC 51142 / BH68) (Cyanothece sp. (strain ATCC 51142)), this protein is ATP phosphoribosyltransferase.